The sequence spans 186 residues: Protein Syd (186 aa).

This sequence belongs to the Syd family.

It is found in the cell inner membrane. Functionally, interacts with the SecY protein in vivo. May bind preferentially to an uncomplexed state of SecY, thus functioning either as a chelating agent for excess SecY in the cell or as a regulatory factor that negatively controls the translocase function. The sequence is that of Protein Syd from Pseudoalteromonas atlantica (strain T6c / ATCC BAA-1087).